The following is a 98-amino-acid chain: NADH-ubiquinone oxidoreductase chain 4L (98 aa).

Transmembrane regions (helical) follow at residues 1–21, 29–49, and 59–79; these read MTTMFFNLLLAFMVALMGVYI, TLLCLEGMMLSIFIMVSLTLL, and FPLILLVFSACEAGVGLALLV.

Belongs to the complex I subunit 4L family. Core subunit of respiratory chain NADH dehydrogenase (Complex I) which is composed of 45 different subunits.

The protein resides in the mitochondrion inner membrane. It catalyses the reaction a ubiquinone + NADH + 5 H(+)(in) = a ubiquinol + NAD(+) + 4 H(+)(out). Its function is as follows. Core subunit of the mitochondrial membrane respiratory chain NADH dehydrogenase (Complex I) which catalyzes electron transfer from NADH through the respiratory chain, using ubiquinone as an electron acceptor. Part of the enzyme membrane arm which is embedded in the lipid bilayer and involved in proton translocation. The polypeptide is NADH-ubiquinone oxidoreductase chain 4L (MT-ND4L) (Zaglossus bruijni (Western long-beaked echidna)).